We begin with the raw amino-acid sequence, 141 residues long: VLSPADKTNVKSTWDKIGGHAGEYGGEALERTFASFPTTKTYFPHFDLSHGSAQVKAHGKKVADALTNAVAHMDDLPGAMSALSDLHAYKLRVDPVNFKLLSHCLLVTLACHHPAEFTPAVHASLDKFFSAVSTVLTSKYR.

A Globin domain is found at Val1–Arg141. A Phosphoserine modification is found at Ser3. Lys7 is modified (N6-succinyllysine). The residue at position 8 (Thr8) is a Phosphothreonine. Residue Lys11 is modified to N6-succinyllysine. At Lys16 the chain carries N6-acetyllysine; alternate. Lys16 bears the N6-succinyllysine; alternate mark. Tyr24 carries the post-translational modification Phosphotyrosine. Ser35 is subject to Phosphoserine. Lys40 is modified (N6-succinyllysine). The residue at position 49 (Ser49) is a Phosphoserine. An O2-binding site is contributed by His58. His87 contributes to the heme b binding site. Residue Ser102 is modified to Phosphoserine. The residue at position 108 (Thr108) is a Phosphothreonine. Phosphoserine is present on Ser124. Phosphothreonine is present on residues Thr134 and Thr137. Ser138 carries the post-translational modification Phosphoserine.

Belongs to the globin family. Heterotetramer of two alpha chains and two beta chains. Red blood cells.

Involved in oxygen transport from the lung to the various peripheral tissues. The polypeptide is Hemoglobin subunit alpha-1/2 (Mustela lutreola (European mink)).